The following is a 167-amino-acid chain: Cyclic pyranopterin monophosphate synthase 2 (167 aa).

A disordered region spans residues 1–23 (MARASGASDYRSGELSHQDERGA). The segment covering 11–23 (RSGELSHQDERGA) has biased composition (basic and acidic residues). Residues 86–88 (LCH) and 122–123 (ME) each bind substrate. The active site involves Asp-137.

It belongs to the MoaC family. In terms of assembly, homohexamer; trimer of dimers.

The catalysed reaction is (8S)-3',8-cyclo-7,8-dihydroguanosine 5'-triphosphate = cyclic pyranopterin phosphate + diphosphate. The protein operates within cofactor biosynthesis; molybdopterin biosynthesis. Its function is as follows. Catalyzes the conversion of (8S)-3',8-cyclo-7,8-dihydroguanosine 5'-triphosphate to cyclic pyranopterin monophosphate (cPMP). The protein is Cyclic pyranopterin monophosphate synthase 2 (moaC2) of Mycobacterium bovis (strain ATCC BAA-935 / AF2122/97).